We begin with the raw amino-acid sequence, 470 residues long: Cysteine--tRNA ligase (470 aa).

Cys28 is a binding site for Zn(2+). Residues 30–40 (PTVYNYIHIGN) carry the 'HIGH' region motif. The Zn(2+) site is built by Cys212, His237, and Glu241. Residues 271-275 (KMSKS) carry the 'KMSKS' region motif. Lys274 is an ATP binding site.

Belongs to the class-I aminoacyl-tRNA synthetase family. As to quaternary structure, monomer. It depends on Zn(2+) as a cofactor.

It localises to the cytoplasm. It carries out the reaction tRNA(Cys) + L-cysteine + ATP = L-cysteinyl-tRNA(Cys) + AMP + diphosphate. The chain is Cysteine--tRNA ligase from Limosilactobacillus reuteri (strain DSM 20016) (Lactobacillus reuteri).